We begin with the raw amino-acid sequence, 375 residues long: Queuine tRNA-ribosyltransferase (375 aa).

Catalysis depends on Asp-89, which acts as the Proton acceptor. Substrate contacts are provided by residues 89-93, Asp-143, Gln-187, and Gly-214; that span reads DSGGF. The segment at 245–251 is RNA binding; it reads GVGKPED. Residue Asp-264 is the Nucleophile of the active site. An RNA binding; important for wobble base 34 recognition region spans residues 269-273; that stretch reads TRNAR. 4 residues coordinate Zn(2+): Cys-302, Cys-304, Cys-307, and His-333.

Belongs to the queuine tRNA-ribosyltransferase family. As to quaternary structure, homodimer. Within each dimer, one monomer is responsible for RNA recognition and catalysis, while the other monomer binds to the replacement base PreQ1. Zn(2+) serves as cofactor.

It carries out the reaction 7-aminomethyl-7-carbaguanine + guanosine(34) in tRNA = 7-aminomethyl-7-carbaguanosine(34) in tRNA + guanine. Its pathway is tRNA modification; tRNA-queuosine biosynthesis. Catalyzes the base-exchange of a guanine (G) residue with the queuine precursor 7-aminomethyl-7-deazaguanine (PreQ1) at position 34 (anticodon wobble position) in tRNAs with GU(N) anticodons (tRNA-Asp, -Asn, -His and -Tyr). Catalysis occurs through a double-displacement mechanism. The nucleophile active site attacks the C1' of nucleotide 34 to detach the guanine base from the RNA, forming a covalent enzyme-RNA intermediate. The proton acceptor active site deprotonates the incoming PreQ1, allowing a nucleophilic attack on the C1' of the ribose to form the product. After dissociation, two additional enzymatic reactions on the tRNA convert PreQ1 to queuine (Q), resulting in the hypermodified nucleoside queuosine (7-(((4,5-cis-dihydroxy-2-cyclopenten-1-yl)amino)methyl)-7-deazaguanosine). The polypeptide is Queuine tRNA-ribosyltransferase (Aliivibrio fischeri (strain ATCC 700601 / ES114) (Vibrio fischeri)).